The following is a 102-amino-acid chain: Thioredoxin (102 aa).

Residues 2–102 (VTEIKSLKQL…KAKIVQLVSQ (101 aa)) enclose the Thioredoxin domain. C30 and C33 are joined by a disulfide.

The protein belongs to the thioredoxin family.

Its function is as follows. Participates in various redox reactions through the reversible oxidation of its active center dithiol to a disulfide and catalyzes dithiol-disulfide exchange reactions. The polypeptide is Thioredoxin (trxA) (Mycoplasma pneumoniae (strain ATCC 29342 / M129 / Subtype 1) (Mycoplasmoides pneumoniae)).